The following is a 501-amino-acid chain: MNMSALTFNSTPMITTATATDDRSRILGYNGTHSCSRLSRKKNPSIMACSTTKPLAPVVDHHGVNESGLSRIESLSQVSGVLGCQSGDEGKGKLVDMLARHFDIVARCQGGANAGHTIYNSEGKKFLLHLVPSGILNEGTTCVIGNGVVVHLPGLFKEIDGLESNGVSSQGRILVSDRAHLLFDFHQEIDGLREAELAKSFIGTTKRGIGPCYSSKVIRNGIRVSDLRHMDTFSQKLDLLLSDAAARFPDFKYGGPDMLKEEVERYKKFAERLEPFVTDTVHFINGAISQKKKILVEGSQATMLDIDFGTYPFVTSSSSVAGGICTGLGIAPRVVGDLVGVVKAYTTRVGSGPFPTEITGKVGDFLRSAGQEFGNITGRPRRCGWLDIVAVRYCCQINGFASLNLSKLDLLSDLSKIQLGVTYRLPDGSILNSFPSDLHLLEHIKVKYEVLPGWLSDISSIRKYSDLPKAAREYVERIEELVGVPIHYIGIGPGRDAFLYK.

GTP is bound by residues 87–93 (GDEGKGK) and 115–117 (GHT). Asp88 functions as the Proton acceptor in the catalytic mechanism. Positions 88 and 115 each coordinate Mg(2+). Residues 88–91 (DEGK), 113–116 (NAGH), Thr205, Arg219, Gln300, Thr315, and Arg379 each bind IMP. His116 functions as the Proton donor in the catalytic mechanism. 375 to 381 (NITGRPR) contacts substrate. GTP is bound by residues Arg381, 407-409 (KLD), and 490-492 (GIG).

Belongs to the adenylosuccinate synthetase family. In terms of assembly, homodimer. It depends on Mg(2+) as a cofactor.

It is found in the plastid. Its subcellular location is the chloroplast. It carries out the reaction IMP + L-aspartate + GTP = N(6)-(1,2-dicarboxyethyl)-AMP + GDP + phosphate + 2 H(+). The protein operates within purine metabolism; AMP biosynthesis via de novo pathway; AMP from IMP: step 1/2. Plays an important role in the de novo pathway and in the salvage pathway of purine nucleotide biosynthesis. Catalyzes the first committed step in the biosynthesis of AMP from IMP. This chain is Adenylosuccinate synthetase 2, chloroplastic, found in Capsicum frutescens (Cayenne pepper).